The following is a 612-amino-acid chain: Elongation factor 4 (612 aa).

Residues 12 to 194 form the tr-type G domain; sequence SRIRNFSIIA…QIVEKVPAPA (183 aa). GTP contacts are provided by residues 24–29 and 141–144; these read DHGKST and NKID.

This sequence belongs to the TRAFAC class translation factor GTPase superfamily. Classic translation factor GTPase family. LepA subfamily.

The protein resides in the cell membrane. It carries out the reaction GTP + H2O = GDP + phosphate + H(+). Required for accurate and efficient protein synthesis under certain stress conditions. May act as a fidelity factor of the translation reaction, by catalyzing a one-codon backward translocation of tRNAs on improperly translocated ribosomes. Back-translocation proceeds from a post-translocation (POST) complex to a pre-translocation (PRE) complex, thus giving elongation factor G a second chance to translocate the tRNAs correctly. Binds to ribosomes in a GTP-dependent manner. The polypeptide is Elongation factor 4 (Bacillus pumilus (strain SAFR-032)).